The sequence spans 372 residues: Mitogen-activated protein kinase homolog NTF3 (372 aa).

Residues 32 to 319 (YVPIKPIGRG…VIEALQHPYM (288 aa)) enclose the Protein kinase domain. Residues 38–46 (IGRGAYGIV) and lysine 61 contribute to the ATP site. The Proton acceptor role is filled by aspartate 158. At threonine 191 the chain carries Phosphothreonine. Residues 191–193 (TEY) carry the TXY motif. A Phosphotyrosine modification is found at tyrosine 193.

The protein belongs to the protein kinase superfamily. CMGC Ser/Thr protein kinase family. MAP kinase subfamily. Requires Mg(2+) as cofactor. Post-translationally, dually phosphorylated on Thr-191 and Tyr-193, which activates the enzyme. Very low autophosphorylation, although dramatically increased when Mn(2+) is added to the reaction instead of Mg(2+). In terms of tissue distribution, ubiquitous.

It carries out the reaction L-seryl-[protein] + ATP = O-phospho-L-seryl-[protein] + ADP + H(+). The enzyme catalyses L-threonyl-[protein] + ATP = O-phospho-L-threonyl-[protein] + ADP + H(+). Its activity is regulated as follows. Activated by tyrosine and threonine phosphorylation. This chain is Mitogen-activated protein kinase homolog NTF3 (NTF3), found in Nicotiana tabacum (Common tobacco).